An 883-amino-acid chain; its full sequence is Protein argonaute 16 (883 aa).

Residues 254-366 (PVFDFLLTNQ…VPIELCHMVS (113 aa)) form the PAZ domain. One can recognise a Piwi domain in the interval 535–844 (FLLCVLPERK…AAAQMGQFMK (310 aa)).

It belongs to the argonaute family. Ago subfamily.

In terms of biological role, probably involved in the RNA silencing pathway. May bind to short RNAs such as microRNAs (miRNAs) or short interfering RNAs (siRNAs), and represses the translation of mRNAs which are complementary to them. In Oryza sativa subsp. japonica (Rice), this protein is Protein argonaute 16 (AGO16).